Reading from the N-terminus, the 398-residue chain is S-adenosylmethionine synthase (398 aa).

His16 contacts ATP. Asp18 provides a ligand contact to Mg(2+). Glu51 contributes to the K(+) binding site. L-methionine contacts are provided by Glu64 and Gln108. The tract at residues 108 to 118 (QSADIAQGVDA) is flexible loop. ATP is bound by residues 176 to 178 (DSK), 242 to 243 (KF), Asp251, 257 to 258 (RK), Ala274, and Lys278. Position 251 (Asp251) interacts with L-methionine. Position 282 (Lys282) interacts with L-methionine.

The protein belongs to the AdoMet synthase family. As to quaternary structure, homotetramer; dimer of dimers. Requires Mg(2+) as cofactor. The cofactor is K(+).

Its subcellular location is the cytoplasm. The catalysed reaction is L-methionine + ATP + H2O = S-adenosyl-L-methionine + phosphate + diphosphate. It functions in the pathway amino-acid biosynthesis; S-adenosyl-L-methionine biosynthesis; S-adenosyl-L-methionine from L-methionine: step 1/1. Functionally, catalyzes the formation of S-adenosylmethionine (AdoMet) from methionine and ATP. The overall synthetic reaction is composed of two sequential steps, AdoMet formation and the subsequent tripolyphosphate hydrolysis which occurs prior to release of AdoMet from the enzyme. In Nitrobacter hamburgensis (strain DSM 10229 / NCIMB 13809 / X14), this protein is S-adenosylmethionine synthase.